The primary structure comprises 390 residues: Coiled-coil domain-containing protein 85C (390 aa).

2 coiled-coil regions span residues 26–86 (KEEL…RELC) and 116–146 (KEVG…KEII). The tract at residues 153–237 (RNGPGSRSSI…RSIPNGLNDS (85 aa)) is disordered. The span at 157–172 (GSRSSIDSQNSLTNLN) shows a compositional bias: polar residues. Low complexity predominate over residues 182–194 (DGSSTSSTGSAGS).

It belongs to the CCDC85 family.

Its subcellular location is the cell junction. The protein localises to the tight junction. It localises to the adherens junction. Its function is as follows. May play a role in cell-cell adhesion and epithelium development. May play an important role in cortical development, especially in the maintenance of radial glia. This is Coiled-coil domain-containing protein 85C (ccdc85c) from Xenopus laevis (African clawed frog).